A 450-amino-acid polypeptide reads, in one-letter code: Sorting nexin-4 (450 aa).

Methionine 1 carries the N-acetylmethionine modification. The disordered stretch occupies residues 1–53; the sequence is MEQAAPDPERLWQPAPLEPLSHPDAGLESMVGEETKGARDEGPGDGTMTENNF. The span at 33 to 42 shows a compositional bias: basic and acidic residues; it reads EETKGARDEG. In terms of domain architecture, PX spans 61–187; sequence SVSEAEKRTG…YLFLTQEGNW (127 aa). Residues arginine 106, serine 108, lysine 132, and arginine 154 each coordinate a 1,2-diacyl-sn-glycero-3-phospho-(1D-myo-inositol-3-phosphate).

The protein belongs to the sorting nexin family. In terms of assembly, heterodimer; heterodimerizes with SNX7 or SNX30. Interacts with WWC1/KIBRA. Identified in a complex with WWC1/KIBRA and dynein components DYNLL1 and DYNC1I2. Interacts with BIN1.

It is found in the early endosome. The protein localises to the early endosome membrane. Involved in the regulation of endocytosis and in several stages of intracellular trafficking. Plays a role in recycling endocytosed transferrin receptor and prevent its degradation. Involved in autophagosome assembly by regulating trafficking and recycling of phospholipid scramblase ATG9A. The protein is Sorting nexin-4 of Bos taurus (Bovine).